A 622-amino-acid chain; its full sequence is Low affinity potassium transport system protein Kup (622 aa).

A run of 12 helical transmembrane segments spans residues 9–29 (LPAI…TSPL), 49–69 (VFGF…IKYL), 103–123 (VIMG…TPAI), 137–157 (PQLD…LFMI), 165–185 (VGKL…VLGL), 213–233 (VSFI…ALYA), 247–267 (WFTV…ALLL), 276–296 (PFFL…AALA), 337–357 (IYIP…IVSF), 363–383 (LAAA…ILST), 396–416 (FVAL…SANL), and 419–439 (LLSG…IMTT).

Belongs to the HAK/KUP transporter (TC 2.A.72) family.

It localises to the cell inner membrane. The enzyme catalyses K(+)(in) + H(+)(in) = K(+)(out) + H(+)(out). Responsible for the low-affinity transport of potassium into the cell. Likely operates as a K(+):H(+) symporter. This chain is Low affinity potassium transport system protein Kup, found in Salmonella typhi.